Consider the following 381-residue polypeptide: UDP-4-amino-4-deoxy-L-arabinose--oxoglutarate aminotransferase (381 aa).

Lys-182 is subject to N6-(pyridoxal phosphate)lysine.

The protein belongs to the DegT/DnrJ/EryC1 family. ArnB subfamily. Homodimer. Pyridoxal 5'-phosphate is required as a cofactor.

It catalyses the reaction UDP-4-amino-4-deoxy-beta-L-arabinose + 2-oxoglutarate = UDP-beta-L-threo-pentopyranos-4-ulose + L-glutamate. It participates in nucleotide-sugar biosynthesis; UDP-4-deoxy-4-formamido-beta-L-arabinose biosynthesis; UDP-4-deoxy-4-formamido-beta-L-arabinose from UDP-alpha-D-glucuronate: step 2/3. It functions in the pathway bacterial outer membrane biogenesis; lipopolysaccharide biosynthesis. Functionally, catalyzes the conversion of UDP-4-keto-arabinose (UDP-Ara4O) to UDP-4-amino-4-deoxy-L-arabinose (UDP-L-Ara4N). The modified arabinose is attached to lipid A and is required for resistance to polymyxin and cationic antimicrobial peptides. This is UDP-4-amino-4-deoxy-L-arabinose--oxoglutarate aminotransferase from Edwardsiella ictaluri (strain 93-146).